A 242-amino-acid chain; its full sequence is HTH domain-truncated transcriptional regulator QseD (242 aa).

Belongs to the LysR transcriptional regulatory family.

Its function is as follows. Represses EHEC virulence expression. Down-regulates expression of LEE (locus of enterocyte effacement) and iraD genes, and alters AE (attaching and effacing) lesion formation. May regulate transcription through interactions with another HTH DNA-binding protein. In Escherichia coli O157:H7, this protein is HTH domain-truncated transcriptional regulator QseD (qseD).